The following is a 197-amino-acid chain: Small ribosomal subunit protein uS4A (197 aa).

In terms of domain architecture, S4 RNA-binding spans 107–181 (RRLQTQVYKL…VARRNAARKA (75 aa)). Residues 160 to 197 (PTSPFGGARPGRVARRNAARKAEASGEAADEADEADEE) form a disordered region. Lysine 180 is covalently cross-linked (Glycyl lysine isopeptide (Lys-Gly) (interchain with G-Cter in ubiquitin)). Serine 184 carries the phosphoserine modification. Acidic residues predominate over residues 187-197 (AADEADEADEE).

Belongs to the universal ribosomal protein uS4 family. Component of the small ribosomal subunit (SSU). Mature yeast ribosomes consist of a small (40S) and a large (60S) subunit. The 40S small subunit contains 1 molecule of ribosomal RNA (18S rRNA) and 33 different proteins (encoded by 57 genes). The large 60S subunit contains 3 rRNA molecules (25S, 5.8S and 5S rRNA) and 46 different proteins (encoded by 81 genes). Interacts with snoRNA U3. uS11 interacts with MPP10. Component of the ribosomal small subunit (SSU) processome composed of at least 40 protein subunits and snoRNA U3.

The protein localises to the cytoplasm. The protein resides in the nucleus. It is found in the nucleolus. In terms of biological role, component of the ribosome, a large ribonucleoprotein complex responsible for the synthesis of proteins in the cell. The small ribosomal subunit (SSU) binds messenger RNAs (mRNAs) and translates the encoded message by selecting cognate aminoacyl-transfer RNA (tRNA) molecules. The large subunit (LSU) contains the ribosomal catalytic site termed the peptidyl transferase center (PTC), which catalyzes the formation of peptide bonds, thereby polymerizing the amino acids delivered by tRNAs into a polypeptide chain. The nascent polypeptides leave the ribosome through a tunnel in the LSU and interact with protein factors that function in enzymatic processing, targeting, and the membrane insertion of nascent chains at the exit of the ribosomal tunnel. uS4 is involved in nucleolar processing of pre-18S ribosomal RNA and ribosome assembly. The chain is Small ribosomal subunit protein uS4A from Saccharomyces cerevisiae (strain ATCC 204508 / S288c) (Baker's yeast).